We begin with the raw amino-acid sequence, 520 residues long: Ubiquitin carboxyl-terminal hydrolase 3 (520 aa).

Methionine 1 is subject to N-acetylmethionine. A UBP-type zinc finger spans residues 1 to 121 (MECPHLSSSV…QKVREHLQNL (121 aa)). Zn(2+) is bound by residues cysteine 3, histidine 5, cysteine 29, cysteine 32, cysteine 41, cysteine 44, cysteine 49, histidine 56, histidine 60, histidine 82, cysteine 95, and cysteine 98. Residues 159–511 (TGLRNLGNTC…KAYILFYVER (353 aa)) form the USP domain. The active-site Nucleophile is the cysteine 168. The Proton acceptor role is filled by histidine 471.

It belongs to the peptidase C19 family. USP3 subfamily. Interacts (via UBP-type domain) with H2A; the interaction is less efficient than with monoubiquitinated H2A.

Its subcellular location is the nucleus. The protein localises to the cytoplasm. The catalysed reaction is Thiol-dependent hydrolysis of ester, thioester, amide, peptide and isopeptide bonds formed by the C-terminal Gly of ubiquitin (a 76-residue protein attached to proteins as an intracellular targeting signal).. Functionally, deubiquitinase that plays a role in several cellular processes including transcriptional regulation, cell cycle progression or innate immunity. In response to DNA damage, deubiquitinates monoubiquitinated target proteins such as histone H2A and H2AX and thereby counteracts RNF168- and RNF8-mediated ubiquitination. In turn, participates in the recruitment of DNA damage repair factors to DNA break sites. Required for proper progression through S phase and subsequent mitotic entry. Acts as a positive regulator of TP53 by deubiquitinating and stabilizing it to promote normal cell proliferation and transformation. Participates in establishing tolerance innate immune memory through non-transcriptional feedback. Mechanistically, negatively regulates TLR-induced NF-kappa-B signaling by targeting and removing the 'Lys-63'-linked polyubiquitin chains on MYD88. Negatively regulates the activation of type I interferon signaling by mediating 'Lys-63'-linked polyubiquitin chains on RIGI and IFIH1. Also deubiquinates ASC/PYCARD, the central adapter mediating the assembly and activation of most inflammasomes, and thereby promotes inflammasome activation. The polypeptide is Ubiquitin carboxyl-terminal hydrolase 3 (Usp3) (Mus musculus (Mouse)).